The primary structure comprises 513 residues: Ferulic acid decarboxylase 1 (513 aa).

Positions 174, 197, and 240 each coordinate Mn(2+). Prenylated FMN contacts are provided by residues 174–179, 196–197, and Glu240; these read NWSIAR and QH. Residue Glu289 is the Proton donor of the active site. Lys405 contacts prenylated FMN.

The protein belongs to the UbiD family. UbiD-like/FDC subfamily. Homodimer. May form higher order oligomers. Mn(2+) is required as a cofactor. It depends on prenylated FMN as a cofactor.

The protein localises to the cytoplasm. It catalyses the reaction (E)-4-coumarate + H(+) = 4-vinylphenol + CO2. The catalysed reaction is (E)-cinnamate + H(+) = styrene + CO2. It carries out the reaction (E)-ferulate + H(+) = 2-methoxy-4-vinylphenol + CO2. Functionally, catalyzes the reversible decarboxylation of aromatic carboxylic acids like ferulic acid, p-coumaric acid or cinnamic acid, producing the corresponding vinyl derivatives 4-vinylphenol, 4-vinylguaiacol, and styrene, respectively, which play the role of aroma metabolites. This is Ferulic acid decarboxylase 1 from Candida dubliniensis (strain CD36 / ATCC MYA-646 / CBS 7987 / NCPF 3949 / NRRL Y-17841) (Yeast).